Consider the following 589-residue polypeptide: Arginine--tRNA ligase (589 aa).

The 'HIGH' region signature appears at 131 to 141; the sequence is ANPTGPLHVGH.

Belongs to the class-I aminoacyl-tRNA synthetase family. In terms of assembly, monomer.

The protein localises to the cytoplasm. It carries out the reaction tRNA(Arg) + L-arginine + ATP = L-arginyl-tRNA(Arg) + AMP + diphosphate. This chain is Arginine--tRNA ligase, found in Legionella pneumophila subsp. pneumophila (strain Philadelphia 1 / ATCC 33152 / DSM 7513).